We begin with the raw amino-acid sequence, 72 residues long: Conotoxin Gla(2)-TxVI/B (72 aa).

A signal peptide spans 1–19 (MEKLIILLLVAAVLMSTQA). A propeptide spanning residues 20–44 (LFQEKRTMKKIDFLSKGKADAEKQR) is cleaved from the precursor. 3 disulfides stabilise this stretch: Cys48–Cys62, Cys55–Cys66, and Cys61–Cys70. Position 56 is a 4-carboxyglutamate (Glu56). A 4-hydroxyproline modification is found at Pro58. Ser71 carries the serine amide modification.

Brominated at one of the Trp residues. In terms of tissue distribution, expressed by the venom duct.

The protein localises to the secreted. The protein is Conotoxin Gla(2)-TxVI/B of Conus textile (Cloth-of-gold cone).